Reading from the N-terminus, the 501-residue chain is Sarpagan bridge enzyme (501 aa).

The chain crosses the membrane as a helical; Signal-anchor for type II membrane protein span at residues Val3–Leu23. Cys441 provides a ligand contact to heme.

This sequence belongs to the cytochrome P450 family. Requires heme as cofactor. In terms of tissue distribution, highly expressed in roots. Expressed at low levels in stems.

The protein localises to the endoplasmic reticulum membrane. The enzyme catalyses (19E)-geissoschizine + reduced [NADPH--hemoprotein reductase] + O2 = polyneuridine aldehyde + oxidized [NADPH--hemoprotein reductase] + 2 H2O + H(+). It catalyses the reaction tetrahydroalstonine + A + reduced [NADPH--hemoprotein reductase] + O2 = alstonine + AH2 + oxidized [NADPH--hemoprotein reductase] + 2 H2O + H(+). The catalysed reaction is ajmalicine + A + reduced [NADPH--hemoprotein reductase] + O2 = serpentine + AH2 + oxidized [NADPH--hemoprotein reductase] + 2 H2O + H(+). It functions in the pathway alkaloid biosynthesis; ajmaline biosynthesis. Functionally, monooxygenase involved in the biosynthesis of ajmaline-type monoterpenoid indole alkaloids (MIAs) natural products, important plant-derived pharmaceuticals used in the therapy of heart disorders. Converts by cyclization the strictosidine-derived geissoschizine to the sarpagan alkaloid polyneuridine aldehyde, precursor of vomilenine, an intermediate chemical in the biosynthesis of ajmaline. Converts by aromatization the tetrahydro-beta-carboline alkaloids tetrahydroalstonine and ajmalicine to the corresponding beta-carboline alkaloids alstonine and serpentine, respectively. This is Sarpagan bridge enzyme from Gelsemium sempervirens (Carolina jasmine).